Reading from the N-terminus, the 116-residue chain is Ly-6/neurotoxin-like protein 1 (116 aa).

An N-terminal signal peptide occupies residues 1–20 (MTPLLTLFLVALIGLPLAQA). The UPAR/Ly6 domain occupies 21 to 105 (LDCHVCAYNG…FAAPATLALA (85 aa)). Disulfide bonds link Cys-23-Cys-46, Cys-26-Cys-33, Cys-39-Cys-64, Cys-68-Cys-85, and Cys-86-Cys-91. Residue Asn-92 is the site of GPI-anchor amidated asparagine attachment. Positions 93–116 (GAGFAAPATLALAPILLATLWGLL) are cleaved as a propeptide — removed in mature form.

In terms of assembly, interacts with nAChRs containing alpha-4:beta-2 (CHRNA4:CHRNB2) and alpha-7 (CHRNA7) subunits. Interacts with CHRNA4 probably in the endoplasmic reticulum prior to nAChR pentameric assembly. Interacts with KCNA2/Potassium voltage-gated channel subfamily A member 2.

It is found in the cell membrane. The protein resides in the cell projection. The protein localises to the dendrite. It localises to the endoplasmic reticulum. Functionally, acts in different tissues through interaction to nicotinic acetylcholine receptors (nAChRs). The proposed role as modulator of nAChR activity seems to be dependent on the nAChR subtype and stoichiometry, and to involve an effect on nAChR trafficking and its cell surface expression, and on single channel properties of the nAChR inserted in the plasma membrane. Modulates functional properties of nicotinic acetylcholine receptors (nAChRs) to prevent excessive excitation, and hence neurodegeneration. Enhances desensitization by increasing both the rate and extent of desensitization of alpha-4:beta-2-containing nAChRs and slowing recovery from desensitization. Promotes large amplitude ACh-evoked currents through alpha-4:beta-2 nAChRs. Is involved in regulation of the nAChR pentameric assembly in the endoplasmic reticulum. Shifts stoichiometry from high sensitivity alpha-4(2):beta-2(3) to low sensitivity alpha-4(3):beta-2(2) nAChR. In vitro modulates alpha-3:beta-4-containing nAChRs. Reduces cell surface expression of (alpha-3:beta-4)(2):beta-4 and (alpha-3:beta-4)(2):alpha-5 nAChRs suggesting an interaction with nAChR alpha-3(-):(+)beta-4 subunit interfaces and an allosteric mode. Corresponding single channel effects characterized by decreased unitary conductance, altered burst proportions and enhanced desensitization/inactivation seem to depend on nAChR alpha:alpha subunit interfaces and are greater in (alpha-3:beta-2)(2):alpha-3 when compared to (alpha-3:beta-2)(2):alpha-5 nAChRs. Prevents plasticity in the primary visual cortex late in life. The polypeptide is Ly-6/neurotoxin-like protein 1 (Saimiri boliviensis boliviensis (Bolivian squirrel monkey)).